The following is a 108-amino-acid chain: UPF0060 membrane protein sll0793 (108 aa).

Helical transmembrane passes span 7–27 (LYFV…WLWI), 32–52 (SVWL…VATL), 64–84 (YGGI…NVVV), and 86–106 (RLDW…MYAN).

This sequence belongs to the UPF0060 family.

Its subcellular location is the cell inner membrane. The polypeptide is UPF0060 membrane protein sll0793 (Synechocystis sp. (strain ATCC 27184 / PCC 6803 / Kazusa)).